A 501-amino-acid polypeptide reads, in one-letter code: Probable cytosol aminopeptidase (501 aa).

Residues K267 and D272 each contribute to the Mn(2+) site. The active site involves K279. Mn(2+) contacts are provided by D290, D349, and E351. R353 is an active-site residue.

Belongs to the peptidase M17 family. Requires Mn(2+) as cofactor.

The protein localises to the cytoplasm. It carries out the reaction Release of an N-terminal amino acid, Xaa-|-Yaa-, in which Xaa is preferably Leu, but may be other amino acids including Pro although not Arg or Lys, and Yaa may be Pro. Amino acid amides and methyl esters are also readily hydrolyzed, but rates on arylamides are exceedingly low.. The enzyme catalyses Release of an N-terminal amino acid, preferentially leucine, but not glutamic or aspartic acids.. Functionally, presumably involved in the processing and regular turnover of intracellular proteins. Catalyzes the removal of unsubstituted N-terminal amino acids from various peptides. This chain is Probable cytosol aminopeptidase, found in Hamiltonella defensa subsp. Acyrthosiphon pisum (strain 5AT).